The sequence spans 262 residues: Small ribosomal subunit protein eS1 (262 aa).

This sequence belongs to the eukaryotic ribosomal protein eS1 family. In terms of assembly, component of the small ribosomal subunit. Mature ribosomes consist of a small (40S) and a large (60S) subunit. The 40S subunit contains about 33 different proteins and 1 molecule of RNA (18S). The 60S subunit contains about 49 different proteins and 3 molecules of RNA (25S, 5.8S and 5S).

Its subcellular location is the cytoplasm. This is Small ribosomal subunit protein eS1 from Theileria parva (East coast fever infection agent).